Here is a 176-residue protein sequence, read N- to C-terminus: Shikimate kinase (176 aa).

Residue 14–19 (GAGKST) coordinates ATP. Position 18 (Ser-18) interacts with Mg(2+). Residues Asp-36, Arg-60, and Gly-83 each contribute to the substrate site. Arg-121 contributes to the ATP binding site. Substrate is bound at residue Arg-140.

It belongs to the shikimate kinase family. In terms of assembly, monomer. It depends on Mg(2+) as a cofactor.

Its subcellular location is the cytoplasm. It catalyses the reaction shikimate + ATP = 3-phosphoshikimate + ADP + H(+). It participates in metabolic intermediate biosynthesis; chorismate biosynthesis; chorismate from D-erythrose 4-phosphate and phosphoenolpyruvate: step 5/7. Functionally, catalyzes the specific phosphorylation of the 3-hydroxyl group of shikimic acid using ATP as a cosubstrate. The polypeptide is Shikimate kinase (Francisella philomiragia subsp. philomiragia (strain ATCC 25017 / CCUG 19701 / FSC 153 / O#319-036)).